The primary structure comprises 410 residues: Transcription factor Dp-1 (410 aa).

K3 carries the post-translational modification N6-acetyllysine. A Phosphoserine; by CDK2 modification is found at S23. Residues 77–114 (VVGSPHTPNTHFVSQNQPSDPSPWSAGKRNRKGEKNGK) form a disordered region. Residues 82 to 95 (HTPNTHFVSQNQPS) show a composition bias toward polar residues. Basic residues predominate over residues 104–114 (KRNRKGEKNGK). The tract at residues 105–127 (RNRKGEKNGKGLRHFSMKVCEKV) is interaction with CEBPA. The DNA-binding element occupies 113–195 (GKGLRHFSMK…KKEIKWIGLP (83 aa)). The DEF box signature appears at 161 to 195 (DQKNIRRRVYDALNVLMAMNIISKEKKEIKWIGLP). The dimerization stretch occupies residues 204–277 (SLEVERQRRL…KKTVIDCSIS (74 aa)). The tract at residues 211 to 327 (RRLERIKQKQ…DLRVARSLVP (117 aa)) is enhances binding of RB protein to E2F. The segment at 214-246 (ERIKQKQSQLQELILQQIAFKNLVQRNRQVEQQ) is DCB1. Residues 259-315 (LPFIIVNTSKKTVIDCSISNDKFEYLFNFDNTFEIHDDIEVLKRMGMACGLESGSCS) form a DCB2 region. The tract at residues 370–410 (GALATSSSGSQYSGSRVETPVSCVGEDDEDDEDFNENEEED) is disordered. Over residues 375–384 (SSSGSQYSGS) the composition is skewed to low complexity. Residues 394-410 (GEDDEDDEDFNENEEED) show a composition bias toward acidic residues.

The protein belongs to the E2F/DP family. In terms of assembly, component of the E2F:DP transcription factor complex. Forms heterodimers with E2F family members. The complex can interact with hypophosphorylated retinoblastoma protein RB1 and related proteins (RBL1 and RBL2) that inhibit the E2F transactivation domain. This repression involves recruitment of histone deacetylase (HDAC). During the cell cycle, from mid-to-late G1 phase, RB family members become phosphorylated, detach from the DRTF1/E2F complex to render E2F transcriptionally active. Part of the E2F6.com-1 complex in G0 phase is composed of E2F6, MGA, MAX, TFDP1, CBX3, BAT8, EUHMTASE1, RING1, RNF2, MBLR, L3MBTL2 YAF2. Component of the DREAM complex (also named LINC complex) at least composed of E2F4, E2F5, LIN9, LIN37, LIN52, LIN54, MYBL1, MYBL2, RBL1, RBL2, RBBP4, TFDP1 and TFDP2. The complex exists in quiescent cells where it represses cell cycle-dependent genes. It dissociates in S phase when LIN9, LIN37, LIN52 and LIN54 form a subcomplex that binds to MYBL2. The complex TFDP1:E2F1 interacts with CEBPA; the interaction prevents CEBPA binding to target gene promoters and represses its transcriptional activity. Post-translationally, ubiquitinated by the BCR(KBTBD5) complex, leading to its subsequent degradation. In terms of processing, phosphorylation by E2F1-bound cyclin A-CDK2, in the S phase, inhibits E2F-mediated DNA binding and transactivation.

The protein localises to the nucleus. Its subcellular location is the cytoplasm. Can stimulate E2F-dependent transcription. Binds DNA cooperatively with E2F family members through the E2 recognition site, 5'-TTTC[CG]CGC-3', found in the promoter region of a number of genes whose products are involved in cell cycle regulation or in DNA replication. The E2F1:DP complex appears to mediate both cell proliferation and apoptosis. Blocks adipocyte differentiation by repressing CEBPA binding to its target gene promoters. The protein is Transcription factor Dp-1 (TFDP1) of Bos taurus (Bovine).